We begin with the raw amino-acid sequence, 113 residues long: Large ribosomal subunit protein eL31B (113 aa).

Belongs to the eukaryotic ribosomal protein eL31 family. Component of the large ribosomal subunit (LSU). Mature yeast ribosomes consist of a small (40S) and a large (60S) subunit. The 40S small subunit contains 1 molecule of ribosomal RNA (18S rRNA) and 33 different proteins (encoded by 57 genes). The large 60S subunit contains 3 rRNA molecules (25S, 5.8S and 5S rRNA) and 46 different proteins (encoded by 81 genes).

It is found in the cytoplasm. Its function is as follows. Component of the ribosome, a large ribonucleoprotein complex responsible for the synthesis of proteins in the cell. The small ribosomal subunit (SSU) binds messenger RNAs (mRNAs) and translates the encoded message by selecting cognate aminoacyl-transfer RNA (tRNA) molecules. The large subunit (LSU) contains the ribosomal catalytic site termed the peptidyl transferase center (PTC), which catalyzes the formation of peptide bonds, thereby polymerizing the amino acids delivered by tRNAs into a polypeptide chain. The nascent polypeptides leave the ribosome through a tunnel in the LSU and interact with protein factors that function in enzymatic processing, targeting, and the membrane insertion of nascent chains at the exit of the ribosomal tunnel. This Saccharomyces cerevisiae (strain ATCC 204508 / S288c) (Baker's yeast) protein is Large ribosomal subunit protein eL31B.